Consider the following 205-residue polypeptide: Ribosomal RNA small subunit methyltransferase G (205 aa).

Residues Gly71, Phe76, 120–121 (IE), and Arg134 contribute to the S-adenosyl-L-methionine site.

This sequence belongs to the methyltransferase superfamily. RNA methyltransferase RsmG family.

It localises to the cytoplasm. It carries out the reaction guanosine(527) in 16S rRNA + S-adenosyl-L-methionine = N(7)-methylguanosine(527) in 16S rRNA + S-adenosyl-L-homocysteine. In terms of biological role, specifically methylates the N7 position of guanine in position 527 of 16S rRNA. This is Ribosomal RNA small subunit methyltransferase G from Paramagnetospirillum magneticum (strain ATCC 700264 / AMB-1) (Magnetospirillum magneticum).